The following is a 77-amino-acid chain: MLSKDKLDRINVLSKKSKEEGLTTEEKAEQKKLREEYLKNVRSSFKNQLSTVTVLDPEGKDVTPQKLRDYQDRNKKH.

Residues 56–77 form a disordered region; sequence DPEGKDVTPQKLRDYQDRNKKH. The segment covering 57 to 77 has biased composition (basic and acidic residues); sequence PEGKDVTPQKLRDYQDRNKKH.

This sequence belongs to the UPF0291 family.

It is found in the cytoplasm. The chain is UPF0291 protein OB1671 from Oceanobacillus iheyensis (strain DSM 14371 / CIP 107618 / JCM 11309 / KCTC 3954 / HTE831).